Here is an 868-residue protein sequence, read N- to C-terminus: Envelope glycoprotein gp160 (868 aa).

Positions 1 to 33 (MAMRAKGIRKNCQHLWRWGTMLLGMLMICSAAA) are cleaved as a signal peptide. Topologically, residues 34 to 696 (NLWVTVYYGV…ITKWLWYIKI (663 aa)) are extracellular. Cysteine 55 and cysteine 75 are oxidised to a cystine. Asparagine 89, asparagine 131, asparagine 138, asparagine 139, asparagine 142, asparagine 162, asparagine 166, asparagine 195, asparagine 198, asparagine 208, asparagine 245, asparagine 252, asparagine 273, asparagine 287, asparagine 300, asparagine 306, asparagine 312, asparagine 342, asparagine 349, asparagine 365, and asparagine 371 each carry an N-linked (GlcNAc...) asparagine; by host glycan. Cystine bridges form between cysteine 120–cysteine 216, cysteine 127–cysteine 207, cysteine 132–cysteine 163, cysteine 229–cysteine 258, and cysteine 239–cysteine 250. The segment at 132–162 (CTDLNTNNTTNTTELSIIVVWEQRGKGEMRN) is V1. The V2 stretch occupies residues 163-207 (CSFNITTSIRDKVQREYALFYKLDVEPIDDNKNTTNNTKYRLINC). Residues 307–340 (CTRPNNHTRKRVTLGPGRVWYTTGEILGNIRQAH) form a V3 region. Cysteine 307 and cysteine 341 are disulfide-bonded. The segment at 373-383 (SSGGDPEIVMH) is CD4-binding loop. Cystine bridges form between cysteine 387/cysteine 456 and cysteine 394/cysteine 429. The interval 394–429 (CNSTQLFNSAWNVTSNGTWSVTRKQKDTGDIITLPC) is V4. N-linked (GlcNAc...) asparagine; by host glycans are attached at residues asparagine 395, asparagine 405, asparagine 409, asparagine 459, and asparagine 473. V5 stretches follow at residues 472-482 (ENQTTEIFRPG) and 474-482 (QTTEIFRPG). The tract at residues 523 to 544 (AVGMLGAMFLGFLGAAGSTMGA) is fusion peptide. Residues 586–604 (KQLQARILAVERYLKDQQL) form an immunosuppression region. Cysteine 610 and cysteine 616 form a disulfide bridge. Residues asparagine 623, asparagine 628, asparagine 637, and asparagine 649 are each glycosylated (N-linked (GlcNAc...) asparagine; by host). Positions 645 to 679 (REIDNYTHLIYTLIEESQNQQEKNQQELLQLDKWA) form a coiled coil. The MPER; binding to GalCer stretch occupies residues 674–695 (QLDKWASLWTWSDITKWLWYIK). A helical membrane pass occupies residues 697–717 (FIMIVGGLIGLRIVFAVLSIV). At 718 to 868 (NRVRQGYSPL…IRQGFERALL (151 aa)) the chain is on the cytoplasmic side. A YXXL motif; contains endocytosis signal motif is present at residues 724 to 727 (YSPL). Residues 731-755 (TLLPNPRGPDRPEGTEEGGGERGRD) are disordered. The segment covering 738–755 (GPDRPEGTEEGGGERGRD) has biased composition (basic and acidic residues). Cysteine 776 carries S-palmitoyl cysteine; by host lipidation. The short motif at 867–868 (LL) is the Di-leucine internalization motif element.

It belongs to the HIV-1 env protein family. In terms of assembly, the mature envelope protein (Env) consists of a homotrimer of non-covalently associated gp120-gp41 heterodimers. The resulting complex protrudes from the virus surface as a spike. There seems to be as few as 10 spikes on the average virion. Interacts with host CD4, CCR5 and CXCR4. Gp120 also interacts with the C-type lectins CD209/DC-SIGN and CLEC4M/DC-SIGNR (collectively referred to as DC-SIGN(R)). Gp120 and gp41 interact with GalCer. Gp120 interacts with host ITGA4/ITGB7 complex; on CD4+ T-cells, this interaction results in rapid activation of integrin ITGAL/LFA-1, which facilitates efficient cell-to-cell spreading of HIV-1. Gp120 interacts with cell-associated heparan sulfate; this interaction increases virus infectivity on permissive cells and may be involved in infection of CD4- cells. The mature envelope protein (Env) consists of a homotrimer of non-covalently associated gp120-gp41 heterodimers. The resulting complex protrudes from the virus surface as a spike. There seems to be as few as 10 spikes on the average virion. Highly glycosylated by host. The high number of glycan on the protein is reffered to as 'glycan shield' because it contributes to hide protein sequence from adaptive immune system. In terms of processing, palmitoylation of the transmembrane protein and of Env polyprotein (prior to its proteolytic cleavage) is essential for their association with host cell membrane lipid rafts. Palmitoylation is therefore required for envelope trafficking to classical lipid rafts, but not for viral replication. Post-translationally, specific enzymatic cleavages in vivo yield mature proteins. Envelope glycoproteins are synthesized as an inactive precursor that is heavily N-glycosylated and processed likely by host cell furin in the Golgi to yield the mature SU and TM proteins. The cleavage site between SU and TM requires the minimal sequence [KR]-X-[KR]-R. About 2 of the 9 disulfide bonds of gp41 are reduced by P4HB/PDI, following binding to CD4 receptor.

Its subcellular location is the virion membrane. It localises to the host cell membrane. The protein resides in the host endosome membrane. In terms of biological role, oligomerizes in the host endoplasmic reticulum into predominantly trimers. In a second time, gp160 transits in the host Golgi, where glycosylation is completed. The precursor is then proteolytically cleaved in the trans-Golgi and thereby activated by cellular furin or furin-like proteases to produce gp120 and gp41. Functionally, attaches the virus to the host lymphoid cell by binding to the primary receptor CD4. This interaction induces a structural rearrangement creating a high affinity binding site for a chemokine coreceptor like CXCR4 and/or CCR5. Acts as a ligand for CD209/DC-SIGN and CLEC4M/DC-SIGNR, which are respectively found on dendritic cells (DCs), and on endothelial cells of liver sinusoids and lymph node sinuses. These interactions allow capture of viral particles at mucosal surfaces by these cells and subsequent transmission to permissive cells. HIV subverts the migration properties of dendritic cells to gain access to CD4+ T-cells in lymph nodes. Virus transmission to permissive T-cells occurs either in trans (without DCs infection, through viral capture and transmission), or in cis (following DCs productive infection, through the usual CD4-gp120 interaction), thereby inducing a robust infection. In trans infection, bound virions remain infectious over days and it is proposed that they are not degraded, but protected in non-lysosomal acidic organelles within the DCs close to the cell membrane thus contributing to the viral infectious potential during DCs' migration from the periphery to the lymphoid tissues. On arrival at lymphoid tissues, intact virions recycle back to DCs' cell surface allowing virus transmission to CD4+ T-cells. Acts as a class I viral fusion protein. Under the current model, the protein has at least 3 conformational states: pre-fusion native state, pre-hairpin intermediate state, and post-fusion hairpin state. During fusion of viral and target intracellular membranes, the coiled coil regions (heptad repeats) assume a trimer-of-hairpins structure, positioning the fusion peptide in close proximity to the C-terminal region of the ectodomain. The formation of this structure appears to drive apposition and subsequent fusion of viral and target cell membranes. Complete fusion occurs in host cell endosomes and is dynamin-dependent, however some lipid transfer might occur at the plasma membrane. The virus undergoes clathrin-dependent internalization long before endosomal fusion, thus minimizing the surface exposure of conserved viral epitopes during fusion and reducing the efficacy of inhibitors targeting these epitopes. Membranes fusion leads to delivery of the nucleocapsid into the cytoplasm. In Human immunodeficiency virus type 1 group M subtype B (isolate CDC-451) (HIV-1), this protein is Envelope glycoprotein gp160.